The following is a 712-amino-acid chain: Ribosomal RNA large subunit methyltransferase K/L (712 aa).

The region spanning 43 to 154 is the THUMP domain; that stretch reads LAYRITLWTR…NGQLTISMNF (112 aa).

This sequence belongs to the methyltransferase superfamily. RlmKL family.

It localises to the cytoplasm. The catalysed reaction is guanosine(2445) in 23S rRNA + S-adenosyl-L-methionine = N(2)-methylguanosine(2445) in 23S rRNA + S-adenosyl-L-homocysteine + H(+). The enzyme catalyses guanosine(2069) in 23S rRNA + S-adenosyl-L-methionine = N(2)-methylguanosine(2069) in 23S rRNA + S-adenosyl-L-homocysteine + H(+). Specifically methylates the guanine in position 2445 (m2G2445) and the guanine in position 2069 (m7G2069) of 23S rRNA. The chain is Ribosomal RNA large subunit methyltransferase K/L from Shewanella frigidimarina (strain NCIMB 400).